A 97-amino-acid chain; its full sequence is Citrate lyase acyl carrier protein (97 aa).

Ser14 is modified (O-(phosphoribosyl dephospho-coenzyme A)serine).

Belongs to the CitD family. Oligomer with a subunit composition of (alpha,beta,gamma)6.

The protein localises to the cytoplasm. Covalent carrier of the coenzyme of citrate lyase. The polypeptide is Citrate lyase acyl carrier protein (Yersinia enterocolitica serotype O:8 / biotype 1B (strain NCTC 13174 / 8081)).